The sequence spans 264 residues: Glucosamine-6-phosphate deaminase (264 aa).

D72 functions as the Proton acceptor; for enolization step in the catalytic mechanism. The active-site For ring-opening step is the D141. H143 acts as the Proton acceptor; for ring-opening step in catalysis. E148 serves as the catalytic For ring-opening step.

The protein belongs to the glucosamine/galactosamine-6-phosphate isomerase family. NagB subfamily. As to quaternary structure, homohexamer.

The catalysed reaction is alpha-D-glucosamine 6-phosphate + H2O = beta-D-fructose 6-phosphate + NH4(+). Its pathway is amino-sugar metabolism; N-acetylneuraminate degradation; D-fructose 6-phosphate from N-acetylneuraminate: step 5/5. With respect to regulation, allosterically activated by N-acetylglucosamine 6-phosphate (GlcNAc6P). Functionally, catalyzes the reversible isomerization-deamination of glucosamine 6-phosphate (GlcN6P) to form fructose 6-phosphate (Fru6P) and ammonium ion. In Glaesserella parasuis serovar 5 (strain SH0165) (Haemophilus parasuis), this protein is Glucosamine-6-phosphate deaminase.